We begin with the raw amino-acid sequence, 752 residues long: Two pore channel protein 2 (752 aa).

Residues 1-84 (MAEPQAESEP…RRYYSNVCQR (84 aa)) lie on the Cytoplasmic side of the membrane. A helical membrane pass occupies residues 85-105 (TLSFTIFLILFLAFIETPSSL). At 106-127 (TSTADVRYRAAPWEPPCGLTES) the chain is on the extracellular side. The chain crosses the membrane as a helical span at residues 128–148 (VEVLCLLVFAADLSVKGYLFG). Residues 149 to 155 (WAHFQKN) lie on the Cytoplasmic side of the membrane. Residues 156 to 176 (LWLLGYLVVLVVSLVDWTVSL) form a helical membrane-spanning segment. At 177 to 183 (SLVCHEP) the chain is on the extracellular side. A helical membrane pass occupies residues 184 to 204 (LRIRRLLRPFFLLQNSSMMKK). Residues 203 to 207 (KKTLK) are interaction with phosphatidylinositol 3,5-bisphosphate. Topologically, residues 205–218 (TLKCIRWSLPEMAS) are cytoplasmic. The helical transmembrane segment at 219-239 (VGLLLAIHLCLFTMFGMLLFA) threads the bilayer. Over 240-254 (GGKQDDGQDRERLTY) the chain is Extracellular. Positions 255-279 (FQNLPESLTSLLVLLTTANNPDVMI) form an intramembrane region, helical; Pore-forming. Over 280–289 (PAYSKNRAYA) the chain is Extracellular. Residues 290–310 (IFFIVFTVIGSLFLMNLLTAI) form a helical membrane-spanning segment. Over 311 to 436 (IYSQFRGYLM…FLFGHYYFDY (126 aa)) the chain is Cytoplasmic. Residues 437-459 (LGNLIALANLVSICVFLVLDADV) form a helical membrane-spanning segment. The Extracellular segment spans residues 460 to 465 (LPAERD). A helical transmembrane segment spans residues 466–486 (DFILGILNCVFIVYYLLEMLL). Over 487–502 (KVFALGLRGYLSYPSN) the chain is Cytoplasmic. Residues 503 to 523 (VFDGLLTVVLLVLEISTLAVY) traverse the membrane as a helical segment. Over 524–554 (RLPHPGWRPEMVGLLSLWDMTRMLNMLIVFR) the chain is Extracellular. Residues 555 to 575 (FLRIIPSMKLMAVVASTVLGL) traverse the membrane as a helical segment. Topologically, residues 576–580 (VQNMR) are cytoplasmic. A helical transmembrane segment spans residues 581-601 (AFGGILVVVYYVFAIIGINLF). Over 602–635 (RGVIVALPGNSSLAPANGSAPCGSFEQLEYWANN) the chain is Extracellular. N-linked (GlcNAc...) asparagine glycosylation is found at Asn611 and Asn618. The helical; Pore-forming intramembrane region spans 636-658 (FDDFAAALVTLWNLMVVNNWQVF). Residues 659–673 (LDAYRRYSGPWSKIY) are Extracellular-facing. A helical transmembrane segment spans residues 674–694 (FVLWWLVSSVIWVNLFLALIL). The Cytoplasmic portion of the chain corresponds to 695–752 (ENFLHKWDPRSHLQPLAGTPEATYQMTVELLFRDILEEPGEDELTERLSQHPHLWLCR).

It belongs to the calcium channel alpha-1 subunit (TC 1.A.1.11) family. Two pore calcium channel subfamily. In terms of assembly, homodimer. Interacts with LRRK2. Interacts with HAX1. Interacts with MTOR; the interaction is required for TPCN2 ATP sensitivity. Found in a complex with LSM12, TPCN1 and TPCN2. Interacts with LSM12. N-glycosylated. As to expression, widely expressed. Expressed at high level in liver and kidney.

It is found in the late endosome membrane. The protein localises to the lysosome membrane. The protein resides in the melanosome membrane. The catalysed reaction is Na(+)(in) = Na(+)(out). The enzyme catalyses Ca(2+)(in) = Ca(2+)(out). Its activity is regulated as follows. Regulated by Mg(2+) ions, cytosolic Mg(2+) selectively inhibits outward current while lysosomal Mg(2+) modestly inhibits both the outward and inward currents. In the absence of Mg(2+), NAADP readily activates TPCN2, with properties similar to PI(3,5)P2. Na(+) current is inhibited by ATP in a MTORC-dependent manner. ATP sensitivity is independent of PI(3,5)P2. Both current elicited by PI(3,5)P2 as well as NAADP are inhibited by tetrandrine. Functionally, intracellular channel initially characterized as a non-selective Ca(2+)-permeable channel activated by NAADP (nicotinic acid adenine dinucleotide phosphate), it is also a highly-selective Na(+) channel activated directly by PI(3,5)P2 (phosphatidylinositol 3,5-bisphosphate). Localizes to the lysosomal and late endosome membranes where it regulates organellar membrane excitability, membrane trafficking, and pH homeostasis. Is associated with a plethora of physiological processes, including mTOR-dependent nutrient sensing, skin pigmentation and autophagy. Ion selectivity is not fixed but rather agonist-dependent and under defined ionic conditions, can be readily activated by both NAADP and PI(3,5)P2. As calcium channel, it increases the pH in the lysosomal lumen, as sodium channel, it promotes lysosomal exocytosis. Plays a crucial role in endolysosomal trafficking in the endolysosomal degradation pathway and is potentially involved in the homeostatic control of many macromolecules and cell metabolites. Also expressed in melanosomes of pigmented cells where mediates a Ca(2+) channel and/or PI(3,5)P2-activated melanosomal Na(+) channel to acidify pH and inhibit tyrosinase activity required for melanogenesis and pigmentation. Unlike the voltage-dependent TPCN1, TPCN2 is voltage independent and can be activated solely by PI(3,5)P2 binding. In contrast, PI(4,5)P2, PI(3,4)P2, PI(3)P and PI(5)P have no obvious effect on channel activation. In terms of biological role, (Microbial infection) During Ebola virus (EBOV) infection, controls the movement of endosomes containing virus particles and is required by EBOV to escape from the endosomal network into the cell cytoplasm. (Microbial infection) Required for cell entry of coronaviruses SARS-CoV and SARS-CoV-2, as well as human coronavirus EMC (HCoV-EMC), by endocytosis. The protein is Two pore channel protein 2 of Homo sapiens (Human).